Here is a 950-residue protein sequence, read N- to C-terminus: Translation initiation factor IF-2 (950 aa).

2 disordered regions span residues Leu-57 to Ile-254 and Asp-304 to Ser-328. Composition is skewed to low complexity over residues Ala-101–Ala-131 and Ala-139–Ala-169. Positions Pro-170–Arg-215 are enriched in pro residues. Positions Pro-216–Gln-233 are enriched in low complexity. The tr-type G domain maps to Ile-449–Lys-618. Positions Gly-458–Thr-465 are G1. Gly-458–Thr-465 is a GTP binding site. A G2 region spans residues Gly-483–His-487. Residues Asp-504–Gly-507 form a G3 region. Residues Asp-504–His-508 and Asn-558–Asp-561 contribute to the GTP site. Residues Asn-558–Asp-561 are G4. The interval Ser-594–Arg-596 is G5.

This sequence belongs to the TRAFAC class translation factor GTPase superfamily. Classic translation factor GTPase family. IF-2 subfamily.

It is found in the cytoplasm. In terms of biological role, one of the essential components for the initiation of protein synthesis. Protects formylmethionyl-tRNA from spontaneous hydrolysis and promotes its binding to the 30S ribosomal subunits. Also involved in the hydrolysis of GTP during the formation of the 70S ribosomal complex. The chain is Translation initiation factor IF-2 from Anaeromyxobacter dehalogenans (strain 2CP-C).